A 159-amino-acid polypeptide reads, in one-letter code: Ribosomal RNA large subunit methyltransferase H (159 aa).

S-adenosyl-L-methionine-binding positions include L76, G108, and L127–F132.

This sequence belongs to the RNA methyltransferase RlmH family. Homodimer.

It is found in the cytoplasm. The enzyme catalyses pseudouridine(1915) in 23S rRNA + S-adenosyl-L-methionine = N(3)-methylpseudouridine(1915) in 23S rRNA + S-adenosyl-L-homocysteine + H(+). Its function is as follows. Specifically methylates the pseudouridine at position 1915 (m3Psi1915) in 23S rRNA. This Ureaplasma urealyticum serovar 10 (strain ATCC 33699 / Western) protein is Ribosomal RNA large subunit methyltransferase H.